Reading from the N-terminus, the 368-residue chain is Methionine import ATP-binding protein MetN (368 aa).

In terms of domain architecture, ABC transporter spans 5–260 (IELNNLSVQF…PKEALTKQFI (256 aa)). 41–48 (GYSGAGKS) provides a ligand contact to ATP.

It belongs to the ABC transporter superfamily. Methionine importer (TC 3.A.1.24) family. In terms of assembly, the complex is composed of two ATP-binding proteins (MetN), two transmembrane proteins (MetI) and a solute-binding protein (MetQ).

The protein resides in the cell membrane. The catalysed reaction is L-methionine(out) + ATP + H2O = L-methionine(in) + ADP + phosphate + H(+). It catalyses the reaction D-methionine(out) + ATP + H2O = D-methionine(in) + ADP + phosphate + H(+). Part of the ABC transporter complex MetNIQ involved in methionine import. Responsible for energy coupling to the transport system. The sequence is that of Methionine import ATP-binding protein MetN from Lactococcus lactis subsp. cremoris (strain SK11).